Reading from the N-terminus, the 302-residue chain is NAD kinase 2 (302 aa).

D79 acts as the Proton acceptor in catalysis. Residues 79 to 80, 153 to 154, D183, 194 to 199, A218, and N252 contribute to the NAD(+) site; these read DG, NE, and TAYSLS.

The protein belongs to the NAD kinase family. A divalent metal cation is required as a cofactor.

The protein localises to the cytoplasm. It carries out the reaction NAD(+) + ATP = ADP + NADP(+) + H(+). Its function is as follows. Involved in the regulation of the intracellular balance of NAD and NADP, and is a key enzyme in the biosynthesis of NADP. Catalyzes specifically the phosphorylation on 2'-hydroxyl of the adenosine moiety of NAD to yield NADP. The chain is NAD kinase 2 from Prochlorococcus marinus subsp. pastoris (strain CCMP1986 / NIES-2087 / MED4).